The chain runs to 457 residues: Siroheme synthase (457 aa).

The precorrin-2 dehydrogenase /sirohydrochlorin ferrochelatase stretch occupies residues 1–204 (MDHLPIFCQL…NDQKAITETT (204 aa)). NAD(+)-binding positions include 22–23 (DV) and 43–44 (LA). A Phosphoserine modification is found at Ser128. The tract at residues 216-457 (GEVVLVGAGP…RDKLNWFSNH (242 aa)) is uroporphyrinogen-III C-methyltransferase. Pro225 is an S-adenosyl-L-methionine binding site. The active-site Proton acceptor is Asp248. Residue Lys270 is the Proton donor of the active site. S-adenosyl-L-methionine contacts are provided by residues 301–303 (GGD), Ile306, 331–332 (TA), Met382, and Gly411.

It in the N-terminal section; belongs to the precorrin-2 dehydrogenase / sirohydrochlorin ferrochelatase family. In the C-terminal section; belongs to the precorrin methyltransferase family.

It catalyses the reaction uroporphyrinogen III + 2 S-adenosyl-L-methionine = precorrin-2 + 2 S-adenosyl-L-homocysteine + H(+). The enzyme catalyses precorrin-2 + NAD(+) = sirohydrochlorin + NADH + 2 H(+). It carries out the reaction siroheme + 2 H(+) = sirohydrochlorin + Fe(2+). It participates in cofactor biosynthesis; adenosylcobalamin biosynthesis; precorrin-2 from uroporphyrinogen III: step 1/1. Its pathway is cofactor biosynthesis; adenosylcobalamin biosynthesis; sirohydrochlorin from precorrin-2: step 1/1. The protein operates within porphyrin-containing compound metabolism; siroheme biosynthesis; precorrin-2 from uroporphyrinogen III: step 1/1. It functions in the pathway porphyrin-containing compound metabolism; siroheme biosynthesis; siroheme from sirohydrochlorin: step 1/1. It participates in porphyrin-containing compound metabolism; siroheme biosynthesis; sirohydrochlorin from precorrin-2: step 1/1. In terms of biological role, multifunctional enzyme that catalyzes the SAM-dependent methylations of uroporphyrinogen III at position C-2 and C-7 to form precorrin-2 via precorrin-1. Then it catalyzes the NAD-dependent ring dehydrogenation of precorrin-2 to yield sirohydrochlorin. Finally, it catalyzes the ferrochelation of sirohydrochlorin to yield siroheme. This is Siroheme synthase from Escherichia coli O6:K15:H31 (strain 536 / UPEC).